The sequence spans 572 residues: Nucleolin 1 (572 aa).

2 disordered regions span residues 1 to 312 and 488 to 572; these read MGKA…ESAT and DEAK…FGDE. A compositionally biased stretch (low complexity) spans 7–21; that stretch reads KSVAVAVAPAAVPAK. Over residues 27–38 the composition is skewed to basic and acidic residues; that stretch reads KREAEDEIEKAV. Low complexity-rich tracts occupy residues 45–58 and 72–81; these read AAAA…PAPK and KAASSSSGSS. Composition is skewed to acidic residues over residues 82–91, 109–122, 144–156, 177–191, 208–222, 235–247, and 261–276; these read SEEDSSESEE, SSDE…DDED, SESD…DEDE, DSSE…SDED, STDG…EDED, SDEE…ESSD, and ESSE…EEDE. The span at 300–311 shows a compositional bias: polar residues; sequence PASNQSQGTESA. 2 RRM domains span residues 311 to 387 and 411 to 492; these read ATLF…LAHE and QSIF…EAKP. Composition is skewed to basic and acidic residues over residues 488-520 and 528-545; these read DEAK…DRFG and GGRD…DGGR. Residues 553 to 566 show a composition bias toward polar residues; sequence QSRQSAGTASTGKK.

Its subcellular location is the nucleus. It localises to the nucleolus. In terms of biological role, involved in pre-rRNA processing and ribosome assembly. In Oryza sativa subsp. japonica (Rice), this protein is Nucleolin 1.